The following is a 27-amino-acid chain: Caerulein precursor fragment R2 (27 aa).

Expressed by the skin glands.

The protein resides in the secreted. In terms of biological role, antimicrobial peptide. The polypeptide is Caerulein precursor fragment R2 (Xenopus ruwenzoriensis (Uganda clawed frog)).